The chain runs to 80 residues: Protein Vpu (80 aa).

Residues 1–6 (MQSLIA) are Extracellular-facing. A helical transmembrane segment spans residues 7 to 27 (AIVALVVVAIIAIVVWSIVFI). Over 28-80 (EYRKILRQRKIDRLIDRIRERAEDSGNESEGDQEELSALVEMGHDAPWDIDDL) the chain is Cytoplasmic. The segment at 49–80 (AEDSGNESEGDQEELSALVEMGHDAPWDIDDL) is disordered. 2 positions are modified to phosphoserine; by host CK2: S52 and S56. Residues 52-62 (SGNESEGDQEE) show a composition bias toward acidic residues.

This sequence belongs to the HIV-1 VPU protein family. In terms of assembly, homopentamer. Interacts with host CD4 and BRTC; these interactions induce proteasomal degradation of CD4. Interacts with host BST2; this interaction leads to the degradation of host BST2. Interacts with host FBXW11. Interacts with host AP1M1; this interaction plays a role in the mistrafficking and subsequent degradation of host BST2. Interacts with host RANBP2; this interaction allows Vpu to down-regulate host BLM sumoylation. Phosphorylated by host CK2. This phosphorylation is necessary for interaction with human BTRC and degradation of CD4.

Its subcellular location is the host membrane. With respect to regulation, ion channel activity is inhibited by hexamethylene amiloride in vitro. Enhances virion budding by targeting host CD4 and Tetherin/BST2 to proteasome degradation. Degradation of CD4 prevents any unwanted premature interactions between viral Env and its host receptor CD4 in the endoplasmic reticulum. Degradation of antiretroviral protein Tetherin/BST2 is important for virion budding, as BST2 tethers new viral particles to the host cell membrane. Mechanistically, Vpu bridges either CD4 or BST2 to BTRC, a substrate recognition subunit of the Skp1/Cullin/F-box protein E3 ubiquitin ligase, induces their ubiquitination and subsequent proteasomal degradation. The alteration of the E3 ligase specificity by Vpu seems to promote the degradation of host IKBKB, leading to NF-kappa-B down-regulation and subsequent apoptosis. Acts as a viroporin that forms an oligomeric ion channel in membranes. Modulates the host DNA repair mechanisms to promote degradation of nuclear viral cDNA in cells that are already productively infected in order to suppress immune sensing and proviral hyper-integration (superinfection). Manipulates PML-NBs and modulates SUMOylation of host BLM protein thereby enhancing its DNA-end processing activity toward viral unintegrated linear DNA. Also inhibits RAD52-mediated homologous repair of viral cDNA, preventing the generation of dead-end circular forms of single copies of the long terminal repeat and permitting sustained nucleolytic attack. This Human immunodeficiency virus type 1 group M subtype B (isolate JH32) (HIV-1) protein is Protein Vpu.